The chain runs to 122 residues: Ig heavy chain V region M511 (122 aa).

One can recognise an Ig-like domain in the interval 1-114 (EVKLVESGGG…SYWYFDVWGA (114 aa)).

This Mus musculus (Mouse) protein is Ig heavy chain V region M511.